The chain runs to 307 residues: Nuclear polyadenylated RNA-binding protein nab2 (307 aa).

Residues 102 to 135 form a disordered region; it reads STDKSQQSFSVPETSIQPQSSQTPNITSLREEKE. Positions 105–129 are enriched in polar residues; that stretch reads KSQQSFSVPETSIQPQSSQTPNITS. 3 consecutive C3H1-type zinc fingers follow at residues 178–202, 217–232, and 254–268; these read TQEV…HPTP, CASG…VKGH, and CKYK…RFIH. Residues 274–307 form a disordered region; it reads NMTWRPPSKTEETSLSERSFAVNESEEQLHVPSV.

The protein belongs to the ZC3H14 family.

The protein localises to the nucleus. In terms of biological role, RNA-binding protein involved in RNA processing. Acts as a regulator of mRNA stability: binds to mRNAs and pre-mRNAs, preventing their degradation. Involved in the biogenesis of circular RNAs (circRNAs) which are produced by back-splicing circularization of pre-mRNAs. This chain is Nuclear polyadenylated RNA-binding protein nab2, found in Schizosaccharomyces pombe (strain 972 / ATCC 24843) (Fission yeast).